A 239-amino-acid polypeptide reads, in one-letter code: uncharacterized protein (239 aa).

Positions 1-65 (MRLDKLLANS…DYREFIYLMM (65 aa)) constitute an S4 RNA-binding domain. The active-site Nucleophile is the Asp103.

Belongs to the pseudouridine synthase RsuA family.

The catalysed reaction is a uridine in RNA = a pseudouridine in RNA. This is an uncharacterized protein from Bacillus subtilis (strain 168).